The primary structure comprises 1160 residues: MEESGVIEVTVKTLDSQSRTFTVRGEWTVKQFKEHIAASVEISVDKQRLIYQGKVLQDERTLTEYNVDGKVIHLVERPPPQSSQPGGGGGGVSGSSGAADGGSSSSQSSAYTTSHDRNANNYVMLGTFNLPVNIMDPQQIQMSVQQMLAGVGEMGRNVRVSTSTGSSGSVDVHINVDQSVQSEPRMRLHLAENLLRETQALIHRLEGQSSEPSQQETPPPQPSSSSFSAHPMDSSPPPPSVSSSASQTEGETQSGPNHPSPLELVEVLSEVRRVEERLRPFMERTHSILGAATSADYNNNTQEREEDQRTLNLIGESLHLLGNTLVALSDLRCNLSAQPPRHLHVVRPMSHYTSPVMMQSGLPHIPIPMNLGSTVTMTSNSRQTSDGQPQPPHSSNQSDQQGQAPPTPANESNQQTGHGQGTPRVIRITHQTMEPVVMMQMNLDGTTVPLHVPGLPPEFMQAIMHQISQQAVTMATAASAGHQGQQQGTAGAGAQNGESPVPPPPQARVVITRPTLSPRVPQPMGTRGTTINLRAAVPPPSGQQTNQMVSGLVGQLLLPLHTGDQTSTTSSSHSFSFSTSSSTSSSSSFSSASPPLSSANTSGQTSTHTTSTASVGQAQESGPGDNLAQLLGSLLGGAAGAGGGVSGATPSITVTVPGVPAFIQGLSEFIQSGQPVFPSPNQQPPPSQATPPSAPSGPAPTTAPSGGAETLSPELFTGIVQGVLSTMMGSLGAGQGNTESIAQFIQRLSQTSNLFTPGAGDAVGFFGDLLSLVCQSFSMVDMVLLLHGNPQPLSRIQPQLTAFFTEHYLQGREPTDANIASASEDLINELEEYIAESFSTVTVREGVDIIQTNMSFLRQQFTRMATHILRCTDNTFGQRLLYLCTQGLFECLALNLYCLRGEQRALTTVINHRIRRMSAEVNPSLVNWLTSMMSMRLHVILEHNPVTEDQIQHYVIYTQSESARRTEAGSQSSQQSQNMNVEEGLSPAPATTAEEALRSTGDTDGDEAPGRPSAEETRGAVAMATTEREESTGEAEPWAATVPPEWVPIIRRDMLTQRKMKAQPPLSDAYMHGMPAKRRKTAQGEGPHLSLTEAVSRAARTAGVRPVTAPDSLQGELETPELQEAYAQQVKSDIKKRLSDDPDYNHQRFPNTHRVFSEDA.

In terms of domain architecture, Ubiquitin-like spans 7–82; the sequence is IEVTVKTLDS…HLVERPPPQS (76 aa). Disordered regions lie at residues 76–114, 206–261, 367–422, 478–547, 563–628, 672–711, 962–1038, and 1126–1160; these read ERPP…YTTS, EGQS…HPSP, IPMN…GQGT, ASAG…QTNQ, GDQT…DNLA, SGQP…AETL, SARR…AEPW, and YAQQ…SEDA. Over residues 85–94 the composition is skewed to gly residues; the sequence is PGGGGGGVSG. Composition is skewed to low complexity over residues 95 to 110 and 223 to 233; these read SSGA…QSSA and SSSSFSAHPMD. Polar residues-rich tracts occupy residues 247–257 and 371–417; these read QTEGETQSGPN and LGST…QQTG. Low complexity-rich tracts occupy residues 478-495 and 566-614; these read ASAG…AGAQ and TSTT…STAS. Pro residues predominate over residues 677 to 698; sequence FPSPNQQPPPSQATPPSAPSGP. Low complexity predominate over residues 699-708; sequence APTTAPSGGA. Residues 1132–1146 are compositionally biased toward basic and acidic residues; that stretch reads SDIKKRLSDDPDYNH.

Component of the bag6/bat3 complex.

The protein resides in the cytoplasm. The protein localises to the cytosol. It is found in the nucleus. It localises to the secreted. Its subcellular location is the extracellular exosome. Functionally, ATP-independent molecular chaperone preventing the aggregation of misfolded and hydrophobic patches-containing proteins. Functions as part of a cytosolic protein quality control complex, the bag6/bat3 complex, which maintains these client proteins in a soluble state and participates in their proper delivery to the endoplasmic reticulum or alternatively can promote their sorting to the proteasome where they undergo degradation. The bag6/bat3 complex is involved in the post-translational delivery of tail-anchored/type II transmembrane proteins to the endoplasmic reticulum membrane. Similarly, the bag6/bat3 complex also functions as a sorting platform for proteins of the secretory pathway that are mislocalized to the cytosol either delivering them to the proteasome for degradation or to the endoplasmic reticulum. The bag6/bat3 complex also plays a role in the endoplasmic reticulum-associated degradation (ERAD), a quality control mechanism that eliminates unwanted proteins of the endoplasmic reticulum through their retrotranslocation to the cytosol and their targeting to the proteasome. It maintains these retrotranslocated proteins in an unfolded yet soluble state condition in the cytosol to ensure their proper delivery to the proteasome. Also required for selective ubiquitin-mediated degradation of defective nascent chain polypeptides by the proteasome. Also involved in endoplasmic reticulum stress-induced pre-emptive quality control, a mechanism that selectively attenuates the translocation of newly synthesized proteins into the endoplasmic reticulum and reroutes them to the cytosol for proteasomal degradation. May ensure the proper degradation of these proteins and thereby protects the endoplasmic reticulum from protein overload upon stress. By stabilizing a large spectrum of proteins, may indirectly affect different biological processes including apoptosis. By controlling the steady-state expression of the IGF1R receptor, indirectly regulates the insulin-like growth factor receptor signaling pathway. Its function is as follows. When nuclear, may also act as a component of some chromatin regulator complex. The chain is Large proline-rich protein BAG6 from Danio rerio (Zebrafish).